The primary structure comprises 187 residues: Peptidyl-tRNA hydrolase (187 aa).

Residue Tyr-16 participates in tRNA binding. The active-site Proton acceptor is the His-21. Positions 66, 68, and 114 each coordinate tRNA.

This sequence belongs to the PTH family. In terms of assembly, monomer.

Its subcellular location is the cytoplasm. It carries out the reaction an N-acyl-L-alpha-aminoacyl-tRNA + H2O = an N-acyl-L-amino acid + a tRNA + H(+). Hydrolyzes ribosome-free peptidyl-tRNAs (with 1 or more amino acids incorporated), which drop off the ribosome during protein synthesis, or as a result of ribosome stalling. Functionally, catalyzes the release of premature peptidyl moieties from peptidyl-tRNA molecules trapped in stalled 50S ribosomal subunits, and thus maintains levels of free tRNAs and 50S ribosomes. This chain is Peptidyl-tRNA hydrolase, found in Malacoplasma penetrans (strain HF-2) (Mycoplasma penetrans).